Reading from the N-terminus, the 178-residue chain is Large ribosomal subunit protein uL6 (178 aa).

Belongs to the universal ribosomal protein uL6 family. As to quaternary structure, part of the 50S ribosomal subunit.

This protein binds to the 23S rRNA, and is important in its secondary structure. It is located near the subunit interface in the base of the L7/L12 stalk, and near the tRNA binding site of the peptidyltransferase center. The protein is Large ribosomal subunit protein uL6 of Streptococcus pyogenes serotype M3 (strain ATCC BAA-595 / MGAS315).